We begin with the raw amino-acid sequence, 315 residues long: Histone-lysine N-methyltransferase SETMAR (315 aa).

Residues Pro-74–Gly-137 form the Pre-SET domain. Zn(2+)-binding residues include Cys-76, Cys-78, Cys-83, Cys-88, Cys-90, Cys-119, Cys-123, Cys-125, and Cys-129. Positions Phe-140–Ser-264 constitute an SET domain. Residues Lys-150–Trp-152, Tyr-193, Arg-221, and Asn-224–His-225 each bind S-adenosyl-L-methionine. Zn(2+) is bound by residues Cys-227, Cys-288, Cys-290, and Cys-295. Residues Pro-284 to Pro-300 enclose the Post-SET domain.

The protein belongs to the class V-like SAM-binding methyltransferase superfamily.

The protein resides in the nucleus. It localises to the chromosome. The enzyme catalyses L-lysyl(36)-[histone H3] + 2 S-adenosyl-L-methionine = N(6),N(6)-dimethyl-L-lysyl(36)-[histone H3] + 2 S-adenosyl-L-homocysteine + 2 H(+). Its function is as follows. Histone methyltransferase that methylates 'Lys-4' and 'Lys-36' of histone H3, 2 specific tags for epigenetic transcriptional activation. Specifically mediates dimethylation of H3 'Lys-36'. This is Histone-lysine N-methyltransferase SETMAR from Rattus norvegicus (Rat).